A 218-amino-acid polypeptide reads, in one-letter code: MSLHHIANRTKKLPPLRVGIGGPVGSGKTTLLEMLCKAMKNKYDLVAITNDIYTKEDQRLLTVSGALAAERIMGVETGGCPHTAIREDASINLEAIDRMLVDFPDADVVFVESGGDNLAATFSPELSDLTIYVIDVAAGEKIPRKGGPGITKSDLFVINKTDLAPYVGADLGVMEADTIRMRTTPKGLKPFVMTNLKTNTGLAEVIAFIETKGMLQAG.

Residue 22–29 (GPVGSGKT) participates in GTP binding.

The protein belongs to the SIMIBI class G3E GTPase family. UreG subfamily. As to quaternary structure, homodimer. UreD, UreF and UreG form a complex that acts as a GTP-hydrolysis-dependent molecular chaperone, activating the urease apoprotein by helping to assemble the nickel containing metallocenter of UreC. The UreE protein probably delivers the nickel.

The protein resides in the cytoplasm. Its function is as follows. Facilitates the functional incorporation of the urease nickel metallocenter. This process requires GTP hydrolysis, probably effectuated by UreG. The polypeptide is Urease accessory protein UreG (Polaromonas sp. (strain JS666 / ATCC BAA-500)).